The primary structure comprises 125 residues: Oxytocin-neurophysin 1 (125 aa).

A signal peptide spans 1 to 19 (MAGPSLACCLLGLLALTSA). C20 and C25 form a disulfide bridge. A Glycine amide modification is found at G28. Intrachain disulfides connect C41/C85, C44/C58, C52/C75, C59/C65, C92/C104, C98/C116, and C105/C110.

Belongs to the vasopressin/oxytocin family. In terms of assembly, interacts with oxytocin receptor (Ki=1.5 nM). Interacts with vasopressin V1aR/AVPR1A (Ki=37 nM), V1bR/AVPR1B (Ki=222 nM) and V2R/AVPR2 receptors (Ki=823 nM).

It localises to the secreted. In terms of biological role, neurophysin 1 specifically binds oxytocin. Oxytocin causes contraction of the smooth muscle of the uterus and of the mammary gland. Acts by binding to oxytocin receptor (OXTR). The polypeptide is Oxytocin-neurophysin 1 (OXT) (Homo sapiens (Human)).